A 269-amino-acid polypeptide reads, in one-letter code: Meiotic drive suppressor wtf5 (269 aa).

Residues Met-1–Thr-67 are disordered. Residues Lys-19–Pro-30 show a composition bias toward basic and acidic residues. The next 5 helical transmembrane spans lie at Leu-73–Cys-93, Trp-110–Phe-130, Val-140–Val-160, Trp-174–Pro-194, and Ile-216–Ile-236.

Belongs to the WTF family. As to quaternary structure, homomer. Interacts with other proteins that exhibit high sequence similarity.

It is found in the spore membrane. Its subcellular location is the vacuole membrane. In terms of biological role, acts as a suppressor component of the dual wtf meiotic drive system, and can suppress but not confer meiotic drive by compatible poisons. Wtf meiotic drive systems promote unequal transmission of alleles from the parental zygote to progeny spores by encoding a poison and an antidote from the same locus; the poison is trans-acting and forms toxic aggregates in all spores within an ascus, wherease the antidote is spore-specific and targets aggregates for degradation by the vacuole. Meiotic drive by wtf systems therefore lead to poisoning of all progeny that do not inherit the dual poison/antidote allele, or express a compatible antidote. The polypeptide is Meiotic drive suppressor wtf5 (Schizosaccharomyces kambucha (Fission yeast)).